Here is a 273-residue protein sequence, read N- to C-terminus: Nitrogenase iron protein 2 (273 aa).

8–15 (GKGGIGKS) lines the ATP pocket. C95 serves as a coordination point for [4Fe-4S] cluster. R98 is modified (ADP-ribosylarginine; by dinitrogenase reductase ADP-ribosyltransferase). [4Fe-4S] cluster is bound at residue C130.

Belongs to the NifH/BchL/ChlL family. Homodimer. The cofactor is [4Fe-4S] cluster. Post-translationally, the reversible ADP-ribosylation of Arg-98 inactivates the nitrogenase reductase and regulates nitrogenase activity.

It catalyses the reaction N2 + 8 reduced [2Fe-2S]-[ferredoxin] + 16 ATP + 16 H2O = H2 + 8 oxidized [2Fe-2S]-[ferredoxin] + 2 NH4(+) + 16 ADP + 16 phosphate + 6 H(+). Its function is as follows. The key enzymatic reactions in nitrogen fixation are catalyzed by the nitrogenase complex, which has 2 components: the iron protein and the molybdenum-iron protein. This chain is Nitrogenase iron protein 2 (nifH2), found in Methanosarcina barkeri.